The primary structure comprises 1141 residues: PR domain zinc finger protein 15 (1141 aa).

The SET domain occupies 49-159; that stretch reads PNLEIRRLED…PGTELRVWYA (111 aa). A C2H2-type 1 zinc finger spans residues 197-219; it reads WACKVCSATFLELQLLNEHLLGH. Positions 224 to 283 are disordered; it reads KSLPPGSQSEAAAPEKEQDTPRGEPPAVPESENVATKEQKKKPRRGRKPKVSKAEQPLVI. Residues 236 to 245 are compositionally biased toward basic and acidic residues; it reads APEKEQDTPR. Residues 262 to 274 are compositionally biased toward basic residues; that stretch reads QKKKPRRGRKPKV. 4 consecutive C2H2-type zinc fingers follow at residues 372–394, 399–422, 460–482, and 487–509; these read YQCN…VRSH, FKCE…SYKH, FQCE…KKKH, and FACE…QRRH. Residue Lys517 forms a Glycyl lysine isopeptide (Lys-Gly) (interchain with G-Cter in SUMO2) linkage. 2 C2H2-type zinc fingers span residues 536-558 and 563-585; these read SGCP…LLTH and YTCE…IHVH. Residues 604–623 are disordered; sequence IGISSEENDDNSDESADSEP. Residues 609-620 show a composition bias toward acidic residues; that stretch reads EENDDNSDESAD. 9 consecutive C2H2-type zinc fingers follow at residues 626-649, 654-676, 690-712, 718-740, 746-768, 774-796, 802-824, 830-853, and 859-882; these read YSCK…MEVH, YGCS…MVIH, HPCE…KLIH, HACE…MRVH, YLCA…MKLH, YECK…CKRH, FMCE…KLIH, WTCS…QLTH, and QSCQ…RRKH. Disordered regions lie at residues 922–973 and 1108–1141; these read AEGK…DETN and QTDV…MYSY. Basic residues predominate over residues 927–938; it reads GKAAKRSHKRKQ. Over residues 1121–1141 the composition is skewed to low complexity; that stretch reads PQQAAQPQVQAEQQQQQMYSY.

This sequence belongs to the class V-like SAM-binding methyltransferase superfamily. As to expression, detected in all tissues examined.

The protein resides in the nucleus. Functionally, sequence-specific DNA-binding transcriptional regulator. Plays a role as a molecular node in a transcriptional network regulating embryonic development and cell fate decision. Stimulates the expression of upstream key transcriptional activators and repressors of the Wnt/beta-catenin and MAPK/ERK pathways, respectively, that are essential for naive pluripotency and self-renewal maintenance of embryonic stem cells (ESCs). Specifically promotes SPRY1 and RSPO1 transcription activation through recognition and direct binding of a specific DNA sequence in their promoter regions. Involved in early embryo development. Also plays a role in induced pluripotent stem cells (iPSCs) reprogramming. This chain is PR domain zinc finger protein 15, found in Homo sapiens (Human).